A 335-amino-acid chain; its full sequence is MTLPLLGPMTLSGFAHSWFFLFLFVVAGLVALYILMQLARQRRMLRFANMELLESVAPKRPSRWRHVPAILLVLSLLLFTIAMAGPTHDVRIPRNRAVVMLVIDVSQSMRATDVEPSRMVAAQEAAKQFADELTPGINLGLIAYAGTATVLVSPTTNREATKNALDKLQFADRTATGEAIFTALQAIATVGAVIGGGDTPPPARIVLFSDGKETMPTNPDNPKGAYTAARTAKDQGVPISTISFGTPYGFVEINDQRQPVPVDDETMKKVAQLSGGNSYNAATLAELRAVYSSLQQQIGYETIKGDASVGWLRLGALALALAALAALLINRRLPT.

2 helical membrane-spanning segments follow: residues 18–38 (WFFLFLFVVAGLVALYILMQL) and 67–87 (VPAILLVLSLLLFTIAMAGPT). The VWFA domain occupies 98–294 (VVMLVIDVSQ…AELRAVYSSL (197 aa)). Residues 309–329 (VGWLRLGALALALAALAALLI) traverse the membrane as a helical segment.

The protein belongs to the UPF0353 family.

The protein resides in the cell membrane. The protein is UPF0353 protein MT1528 of Mycobacterium tuberculosis (strain CDC 1551 / Oshkosh).